The sequence spans 448 residues: RNA-binding protein 42 (448 aa).

Positions 1-29 (MAGAGPAPGLPGAGGPVVPGPGAGIPGKS) are disordered. Position 2 is an N-acetylalanine (Ala2). Residues 11–27 (PGAGGPVVPGPGAGIPG) are compositionally biased toward gly residues. Position 132 is a phosphoserine (Ser132). Position 149 is an asymmetric dimethylarginine (Arg149). Residues 204–448 (ELGLGLGLGL…QKEKKKLGLR (245 aa)) form a necessary for interaction with HNRNPK region. Positions 286–324 (LSLRPRPRPPRPEPPPGLMALEVPEPLSEDKKKGKPEKL) are disordered. Positions 313-324 (SEDKKKGKPEKL) are enriched in basic and acidic residues. The RRM domain maps to 349-427 (FRIFCGDLGN…RPIKLRKSMW (79 aa)).

Belongs to the RRM RBM42 family. Interacts with HNRNPK.

The protein resides in the nucleus. It is found in the cytoplasm. In terms of biological role, binds (via the RRM domain) to the 3'-untranslated region (UTR) of CDKN1A mRNA. This is RNA-binding protein 42 (RBM42) from Bos taurus (Bovine).